Reading from the N-terminus, the 411-residue chain is 2,3-bisphosphoglycerate-independent phosphoglycerate mutase (411 aa).

The protein belongs to the BPG-independent phosphoglycerate mutase family. A-PGAM subfamily.

It carries out the reaction (2R)-2-phosphoglycerate = (2R)-3-phosphoglycerate. It participates in carbohydrate degradation; glycolysis; pyruvate from D-glyceraldehyde 3-phosphate: step 3/5. Its function is as follows. Catalyzes the interconversion of 2-phosphoglycerate and 3-phosphoglycerate. This is 2,3-bisphosphoglycerate-independent phosphoglycerate mutase from Thermococcus kodakarensis (strain ATCC BAA-918 / JCM 12380 / KOD1) (Pyrococcus kodakaraensis (strain KOD1)).